A 236-amino-acid polypeptide reads, in one-letter code: Small ribosomal subunit protein uS3 (236 aa).

A KH type-2 domain is found at 39-112 (IREFITKHPK…RINLKVEEVG (74 aa)). Positions 212–236 (YGDDNDGADAQTGQASKKPKRSYKR) are disordered.

It belongs to the universal ribosomal protein uS3 family. Part of the 30S ribosomal subunit. Forms a tight complex with proteins S10 and S14.

Its function is as follows. Binds the lower part of the 30S subunit head. Binds mRNA in the 70S ribosome, positioning it for translation. This Rhodopirellula baltica (strain DSM 10527 / NCIMB 13988 / SH1) protein is Small ribosomal subunit protein uS3.